The sequence spans 481 residues: UDP-N-acetylmuramate--L-alanine ligase (481 aa).

135 to 141 provides a ligand contact to ATP; that stretch reads GTHGKTT.

This sequence belongs to the MurCDEF family.

The protein localises to the cytoplasm. It catalyses the reaction UDP-N-acetyl-alpha-D-muramate + L-alanine + ATP = UDP-N-acetyl-alpha-D-muramoyl-L-alanine + ADP + phosphate + H(+). It functions in the pathway cell wall biogenesis; peptidoglycan biosynthesis. In terms of biological role, cell wall formation. In Nostoc punctiforme (strain ATCC 29133 / PCC 73102), this protein is UDP-N-acetylmuramate--L-alanine ligase.